The following is a 311-amino-acid chain: Exosome complex component Rrp4 (311 aa).

Residues 63–131 enclose the S1 motif domain; the sequence is GDVVIGEITD…EVKKVKLGLK (69 aa). A KH domain is found at 139–197; that stretch reads RDGILVYITPTKVPRLIGKRGSMINMVKEKTHCDIVVGQNGVVWIKGEPDMERIAEKVV. Residues 222 to 311 are disordered; that stretch reads GVEPEIQVEE…EVKDENNSER (90 aa). Positions 241–300 are enriched in acidic residues; sequence PESEDFEEASDYSEDVEVSPESEDIEEVSDESEDLEVESEDVEEGTDTPAAEEDDGEAGD. Positions 301 to 311 are enriched in basic and acidic residues; sequence AEVKDENNSER.

The protein belongs to the RRP4 family. As to quaternary structure, component of the archaeal exosome complex. Forms a trimer of Rrp4 and/or Csl4 subunits. The trimer associates with a hexameric ring-like arrangement composed of 3 Rrp41-Rrp42 heterodimers.

It localises to the cytoplasm. Non-catalytic component of the exosome, which is a complex involved in RNA degradation. Increases the RNA binding and the efficiency of RNA degradation. Confers strong poly(A) specificity to the exosome. This is Exosome complex component Rrp4 from Methanothermobacter thermautotrophicus (strain ATCC 29096 / DSM 1053 / JCM 10044 / NBRC 100330 / Delta H) (Methanobacterium thermoautotrophicum).